The following is a 498-amino-acid chain: Glycerol kinase (498 aa).

Thr12 provides a ligand contact to ADP. Residues Thr12, Thr13, and Ser14 each coordinate ATP. Sn-glycerol 3-phosphate is bound at residue Thr12. Arg16 serves as a coordination point for ADP. Sn-glycerol 3-phosphate-binding residues include Arg82, Glu83, Tyr134, and Asp244. Glycerol is bound by residues Arg82, Glu83, Tyr134, Asp244, and Gln245. ADP contacts are provided by Thr266 and Gly310. The ATP site is built by Thr266, Gly310, Gln314, and Gly411. Residues Gly411 and Asn415 each contribute to the ADP site.

Belongs to the FGGY kinase family.

It catalyses the reaction glycerol + ATP = sn-glycerol 3-phosphate + ADP + H(+). It functions in the pathway polyol metabolism; glycerol degradation via glycerol kinase pathway; sn-glycerol 3-phosphate from glycerol: step 1/1. Inhibited by fructose 1,6-bisphosphate (FBP). Functionally, key enzyme in the regulation of glycerol uptake and metabolism. Catalyzes the phosphorylation of glycerol to yield sn-glycerol 3-phosphate. In Roseiflexus sp. (strain RS-1), this protein is Glycerol kinase.